A 179-amino-acid chain; its full sequence is Large ribosomal subunit protein uL6 (179 aa).

The protein belongs to the universal ribosomal protein uL6 family. In terms of assembly, part of the 50S ribosomal subunit.

In terms of biological role, this protein binds to the 23S rRNA, and is important in its secondary structure. It is located near the subunit interface in the base of the L7/L12 stalk, and near the tRNA binding site of the peptidyltransferase center. The polypeptide is Large ribosomal subunit protein uL6 (Chlorobium limicola (strain DSM 245 / NBRC 103803 / 6330)).